A 2376-amino-acid polypeptide reads, in one-letter code: Reducing polyketide synthase DEP5 (2376 aa).

Residues 47 to 477 (LEPIAVVGMG…GTNAHTIIES (431 aa)) enclose the Ketosynthase family 3 (KS3) domain. Active-site for beta-ketoacyl synthase activity residues include Cys-221, His-358, and His-399. The tract at residues 593–906 (VFTGQGAQWA…QYLPTLVRGF (314 aa)) is malonyl-CoA:ACP transacylase (MAT) domain. Ser-685 serves as the catalytic For malonyltransferase activity. Residues 983 to 1121 (HDVLGQLTTG…GSIAIRTSAR (139 aa)) form an N-terminal hotdog fold region. Residues 983 to 1158 (HDVLGQLTTG…FNYGPTFQDM (176 aa)) are dehydratase (DH) domain. Residues 983–1286 (HDVLGQLTTG…CIAYEAAIPQ (304 aa)) enclose the PKS/mFAS DH domain. The active-site Proton acceptor; for dehydratase activity is His-1015. The segment at 1131-1286 (LPQRASGRLW…CIAYEAAIPQ (156 aa)) is C-terminal hotdog fold. Residue Asp-1195 is the Proton donor; for dehydratase activity of the active site. The segment at 1659–1964 (GRIQAGKVVF…DSICDNKIVI (306 aa)) is enoyl reductase (ER) domain. Residues 1988-2163 (ATYLLVGCLG…KPACAVVLPM (176 aa)) form a ketoreductase (KR) domain region. A Carrier domain is found at 2289–2368 (DLVRDHFIAK…KFSELVCGAQ (80 aa)). Ser-2327 is subject to O-(pantetheine 4'-phosphoryl)serine.

Its pathway is polyketide biosynthesis. Reducing polyketide synthase; part of the gene cluster that mediates the biosynthesis of depudecin, a highly oxidized eleven-carbon linear polyketide that acts as a histone deacetylase (HDAC) inhibitor and makes a small contribution to pathogenesis. The reducing polyketide synthase DEP5 is the central enzyme in depudecin biosynthesis by yielding the backbone polyketide chain. The monooxygenases DEP2 and DEP4, as well as the uncharacterized protein DEP1, then act as tailoring enzymes to modify the intermediate polyketide chain into depudecin. The polypeptide is Reducing polyketide synthase DEP5 (Alternaria brassicicola (Dark leaf spot agent)).